A 431-amino-acid polypeptide reads, in one-letter code: MRGSAAAAAATVTRVAQRVVAPSAATPGGALPLSWLDRYPTQRALIESLHVFKGRADAAVAPAAAIERALAAALVSYYPIAGRLAERGDGGELVVDCTGEGVWFIEATASCSLEDVDYLEYPLMVDKDELLPHPTYPASESHPEDSLILLVQVTQFACGGFVVGFRFSHAAAPRPDGAPPPVPRHGHLHRLHRPLQGEVPGADGPPVQRVRGAHRQGVAVADARGGVRPGVPRPRVLRHERAPRAPARAPGRLLRQLLLHHAGDGGGGGGGGRVGERRGEADPGGEEAAPGGVRAVERRRRRRRGRPVPDHLRLPDAAGLRLVAAGVRRGGLRVGRPRPRRAAHQPRLHRHLHPRPPLRPQARRPPHHPVRRRRRRRRLPQRHDAPRLITERAHRPPPPTSPAQFDSFFFSFFFWVFSLLSLYARHGIHSP.

The active-site Proton acceptor is the His-169. Disordered stretches follow at residues Val-220–Ala-247, His-260–Arg-313, and Gly-331–Thr-400. The span at Arg-224–Pro-234 shows a compositional bias: low complexity. The segment covering Asp-264–Arg-273 has biased composition (gly residues). Basic residues-rich tracts occupy residues Glu-297–Arg-306 and Gly-335–Pro-380. Positions Gln-381 to His-394 are enriched in basic and acidic residues.

The protein belongs to the plant acyltransferase family.

In terms of biological role, involved in the incorporation of ferulate into the cell wall. May act as arabinoxylan feruloyl transferase. This Oryza sativa subsp. japonica (Rice) protein is Acyl transferase 8.